We begin with the raw amino-acid sequence, 91 residues long: Acylphosphatase (91 aa).

The Acylphosphatase-like domain maps to 3 to 91 (CLRAIVKGKV…ANYSDFRIKH (89 aa)). Residues arginine 18 and asparagine 36 contribute to the active site.

This sequence belongs to the acylphosphatase family.

It catalyses the reaction an acyl phosphate + H2O = a carboxylate + phosphate + H(+). The sequence is that of Acylphosphatase (acyP) from Dehalococcoides mccartyi (strain CBDB1).